The primary structure comprises 426 residues: SrfA-induced gene K protein (426 aa).

Positions 1-23 (MKKMKILSFFILSLAIIIGIVYS) are cleaved as a signal peptide. N-linked (GlcNAc...) asparagine glycosylation is found at Asn-64, Asn-136, Asn-160, and Asn-226. 2 Laminin EGF-like domains span residues 325–348 (DNQC…GMVL) and 384–408 (CNGT…GGEV). Intrachain disulfides connect Cys-330-Cys-339, Cys-342-Cys-358, and Cys-370-Cys-388. N-linked (GlcNAc...) asparagine glycosylation occurs at Asn-385.

This chain is SrfA-induced gene K protein (sigK), found in Dictyostelium discoideum (Social amoeba).